Consider the following 428-residue polypeptide: Phosphomethylpyrimidine synthase 1 (428 aa).

Substrate is bound by residues methionine 94, tyrosine 123, histidine 162, 184-186 (SRG), 225-228 (NGMR), and glutamate 264. Histidine 268 serves as a coordination point for Zn(2+). Substrate is bound at residue tyrosine 291. Histidine 332 provides a ligand contact to Zn(2+). The [4Fe-4S] cluster site is built by cysteine 408, cysteine 411, and cysteine 415.

The protein belongs to the ThiC family. [4Fe-4S] cluster is required as a cofactor.

The enzyme catalyses 5-amino-1-(5-phospho-beta-D-ribosyl)imidazole + S-adenosyl-L-methionine = 4-amino-2-methyl-5-(phosphooxymethyl)pyrimidine + CO + 5'-deoxyadenosine + formate + L-methionine + 3 H(+). It functions in the pathway cofactor biosynthesis; thiamine diphosphate biosynthesis. In terms of biological role, catalyzes the synthesis of the hydroxymethylpyrimidine phosphate (HMP-P) moiety of thiamine from aminoimidazole ribotide (AIR) in a radical S-adenosyl-L-methionine (SAM)-dependent reaction. This Methanosarcina barkeri (strain Fusaro / DSM 804) protein is Phosphomethylpyrimidine synthase 1.